The following is a 183-amino-acid chain: TATA box-binding protein-like 1 (183 aa).

The protein belongs to the TBP family. In terms of assembly, binds TFIIA and TFIIB. As to expression, present in the brain, heart, liver and gizzard.

Its subcellular location is the cytoplasm. The protein localises to the nucleus. Its function is as follows. Part of a specialized transcription system that mediates the transcription of most ribosomal proteins through the 5'-TCT-3' motif which is a core promoter element at these genes. Seems to also mediate the transcription of NF1. Does not bind the TATA box. In Gallus gallus (Chicken), this protein is TATA box-binding protein-like 1 (TBPL1).